A 158-amino-acid chain; its full sequence is 2-C-methyl-D-erythritol 2,4-cyclodiphosphate synthase (158 aa).

A divalent metal cation is bound by residues aspartate 9 and histidine 11. 4-CDP-2-C-methyl-D-erythritol 2-phosphate is bound by residues 9–11 (DVH) and 35–36 (HS). Histidine 43 is a binding site for a divalent metal cation. Residues 57 to 59 (DIG), 62 to 66 (FPDTD), 101 to 107 (AQRPKMA), 133 to 136 (TTTE), phenylalanine 140, and arginine 143 contribute to the 4-CDP-2-C-methyl-D-erythritol 2-phosphate site.

It belongs to the IspF family. Homotrimer. A divalent metal cation is required as a cofactor.

The catalysed reaction is 4-CDP-2-C-methyl-D-erythritol 2-phosphate = 2-C-methyl-D-erythritol 2,4-cyclic diphosphate + CMP. Its pathway is isoprenoid biosynthesis; isopentenyl diphosphate biosynthesis via DXP pathway; isopentenyl diphosphate from 1-deoxy-D-xylulose 5-phosphate: step 4/6. Involved in the biosynthesis of isopentenyl diphosphate (IPP) and dimethylallyl diphosphate (DMAPP), two major building blocks of isoprenoid compounds. Catalyzes the conversion of 4-diphosphocytidyl-2-C-methyl-D-erythritol 2-phosphate (CDP-ME2P) to 2-C-methyl-D-erythritol 2,4-cyclodiphosphate (ME-CPP) with a corresponding release of cytidine 5-monophosphate (CMP). The polypeptide is 2-C-methyl-D-erythritol 2,4-cyclodiphosphate synthase (Lysinibacillus sphaericus (strain C3-41)).